A 630-amino-acid polypeptide reads, in one-letter code: Biosynthetic arginine decarboxylase (630 aa).

N6-(pyridoxal phosphate)lysine is present on Lys99. Phe279–Tyr289 serves as a coordination point for substrate.

This sequence belongs to the Orn/Lys/Arg decarboxylase class-II family. SpeA subfamily. Requires Mg(2+) as cofactor. It depends on pyridoxal 5'-phosphate as a cofactor.

The catalysed reaction is L-arginine + H(+) = agmatine + CO2. Its pathway is amine and polyamine biosynthesis; agmatine biosynthesis; agmatine from L-arginine: step 1/1. Functionally, catalyzes the biosynthesis of agmatine from arginine. The sequence is that of Biosynthetic arginine decarboxylase from Neisseria meningitidis serogroup B (strain ATCC BAA-335 / MC58).